The chain runs to 216 residues: Phosphoserine phosphatase (216 aa).

Residue D10 is the Nucleophile of the active site. 2 residues coordinate Mg(2+): D10 and D12. Residue D12 is the Proton donor of the active site. Substrate-binding positions include E19, R55, 98–99 (SG), and K143. D166 provides a ligand contact to Mg(2+). Residue N169 coordinates substrate.

The protein belongs to the HAD-like hydrolase superfamily. SerB family. Mg(2+) serves as cofactor.

The enzyme catalyses O-phospho-L-serine + H2O = L-serine + phosphate. The catalysed reaction is O-phospho-D-serine + H2O = D-serine + phosphate. Its pathway is amino-acid biosynthesis; L-serine biosynthesis; L-serine from 3-phospho-D-glycerate: step 3/3. This chain is Phosphoserine phosphatase, found in Lactococcus lactis subsp. lactis (strain IL1403) (Streptococcus lactis).